The sequence spans 480 residues: Gamma-aminobutyric acid receptor subunit rho-1 (480 aa).

A signal peptide spans 1 to 21; that stretch reads MLAVQNMKFGIFLLWWGWVLA. Topologically, residues 22–281 are extracellular; that stretch reads AESTAHWPGR…LYINFTLRRH (260 aa). Positions 29 to 38 are enriched in basic and acidic residues; sequence PGREVHEPSR. The segment at 29 to 67 is disordered; that stretch reads PGREVHEPSRKGSRPQRQRRGAHDDAHKQGSPILRRSSD. Positions 39–48 are enriched in basic residues; that stretch reads KGSRPQRQRR. Arginine 126 is a 4-aminobutanoate binding site. Asparagine 141 is a glycosylation site (N-linked (GlcNAc...) asparagine). Serine 190 contacts 4-aminobutanoate. The cysteines at positions 199 and 213 are disulfide-linked. Glutamate 218 is a 4-aminobutanoate binding site. Residues asparagine 235 and asparagine 275 are each glycosylated (N-linked (GlcNAc...) asparagine). A helical membrane pass occupies residues 282–302; sequence IFFFLLQTYFPATLMVMLSWV. Over 303–314 the chain is Cytoplasmic; the sequence is SFWIDRRAVPAR. A helical membrane pass occupies residues 315–335; the sequence is VPLGITTVLTMSTIITGVNAS. Topologically, residues 336–346 are extracellular; sequence MPRVSYIKAVD. A helical transmembrane segment spans residues 347 to 367; it reads IYLWVSFVFVFLSVLEYAAVN. Residues 368 to 458 lie on the Cytoplasmic side of the membrane; the sequence is YLTTVQERKE…MRINTHAIDK (91 aa). A helical membrane pass occupies residues 459-479; that stretch reads YSRIIFPAAYILFNLIYWSIF. Position 480 (serine 480) is a topological domain, extracellular.

The protein belongs to the ligand-gated ion channel (TC 1.A.9) family. Gamma-aminobutyric acid receptor (TC 1.A.9.5) subfamily. GABRR1 sub-subfamily. In terms of assembly, three rho subunits (rho-1/GBRR1, rho-2/GBRR2 and rho-3/GBRR3) coassemble either to form functional homopentamers or heteropentamers. Rho-1/GBRR1 subunits can also associate with alpha-1/GBRA1 subunits to form a functional GABAAR. Interacts with SQSTM1. As to expression, expressed in the cerebellum.

Its subcellular location is the postsynaptic cell membrane. The protein resides in the cell membrane. The enzyme catalyses chloride(in) = chloride(out). Its activity is regulated as follows. Inhibited by TPMPA, a rho-specific antagonist, when forming a homopentamer. In contrast with other GABAARs, rho-1 GABAAR is not inhibited by bicuculline when forming a homopentamer. In terms of biological role, rho subunit of the pentameric ligand-gated chloride channels responsible for mediating the effects of gamma-aminobutyric acid (GABA), the major inhibitory neurotransmitter in the brain. Rho-containing GABA-gated chloride channels are a subclass of GABA(A) receptors (GABAARs) entirely composed of rho subunits, where GABA molecules bind at the rho intersubunit interfaces. When activated by GABA, rho-GABAARs selectively allow the flow of chloride anions across the cell membrane down their electrochemical gradient. Rho-1 subunits are primarily expressed in retina where rho-1-containing GABAARs play a role in retinal neurotransmission. Rho-1 GABAARs are also involved in neuronal tonic (extrasynaptic) and phasic (synaptic) transmission in the Purkinje neurons of the cerebellum. Rho-1 GABAARs may also contribute to the regulation of glial development in the cerebellum by controlling extrasynaptic transmission. The polypeptide is Gamma-aminobutyric acid receptor subunit rho-1 (Mus musculus (Mouse)).